A 28-amino-acid chain; its full sequence is Dermaseptin-2 (28 aa).

Glutamine amide is present on Gln28.

It belongs to the frog skin active peptide (FSAP) family. Dermaseptin subfamily. As to expression, expressed by the skin glands.

Its subcellular location is the secreted. Functionally, antimicrobial peptide with activity against the Gram-positive bacterium S.aureus, and the Gram-negative bacteria E.coli and P.aeruginosa. Probably acts by disturbing membrane functions with its amphipathic structure. Has an activity of stimulation of insulin release, which may protect the species from being eaten by predators by causing fatal hypoglycemia. Has hemolytic activity (60% hemolysis at 128 ug/ml). This chain is Dermaseptin-2, found in Phyllomedusa tarsius (Brownbelly leaf frog).